Reading from the N-terminus, the 389-residue chain is DEAD-box ATP-dependent RNA helicase CshC (389 aa).

A Q motif motif is present at residues Met-1–Lys-26. The Helicase ATP-binding domain occupies Ile-29–Val-199. Residue Ser-42–Thr-49 participates in ATP binding. Residues Asp-147–Asp-150 carry the DEAD box motif. Residues Leu-209 to Lys-379 form the Helicase C-terminal domain. The disordered stretch occupies residues Val-368–Arg-389. A compositionally biased stretch (basic residues) spans Lys-373–Arg-389.

It carries out the reaction ATP + H2O = ADP + phosphate + H(+). Functionally, DEAD-box RNA helicase. Probably has an RNA-dependent ATPase activity and a 3' to 5' RNA helicase activity that uses the energy of ATP hydrolysis to destabilize and unwind short RNA duplexes. The sequence is that of DEAD-box ATP-dependent RNA helicase CshC (cshC) from Bacillus cereus (strain ATCC 14579 / DSM 31 / CCUG 7414 / JCM 2152 / NBRC 15305 / NCIMB 9373 / NCTC 2599 / NRRL B-3711).